Here is a 229-residue protein sequence, read N- to C-terminus: Peptidyl-prolyl cis-trans isomerase FKBP17-1, chloroplastic (229 aa).

Residues 1 to 63 constitute a chloroplast transit peptide; that stretch reads MIRCFAWTPL…SISLSIIAVT (63 aa). In terms of domain architecture, PPIase FKBP-type spans 105–225; it reads GDQIEIHYYG…VFDIELVSTR (121 aa).

Belongs to the FKBP-type PPIase family.

It localises to the plastid. The protein localises to the chloroplast thylakoid lumen. It carries out the reaction [protein]-peptidylproline (omega=180) = [protein]-peptidylproline (omega=0). PPIases accelerate the folding of proteins. It catalyzes the cis-trans isomerization of proline imidic peptide bonds in oligopeptides. The protein is Peptidyl-prolyl cis-trans isomerase FKBP17-1, chloroplastic (FKBP17-1) of Arabidopsis thaliana (Mouse-ear cress).